A 217-amino-acid polypeptide reads, in one-letter code: Claudin-9 (217 aa).

Residues 1–12 (MASTGLELLGMT) are Cytoplasmic-facing. Residues 13–33 (LAVLGWLGTLVSCALPLWKVT) traverse the membrane as a helical segment. Over 34–81 (AFIGNSIVVAQVVWEGLWMSCVVQSTGQMQCKVYDSLLALPQDLQAAR) the chain is Extracellular. Residues 82–102 (ALCVVALLLALLGLLVAITGA) traverse the membrane as a helical segment. Topologically, residues 103 to 116 (QCTTCVEDEGAKAR) are cytoplasmic. Residues 117–137 (IVLTAGVLLLLSGILVLIPVC) traverse the membrane as a helical segment. Topologically, residues 138–159 (WTAHAIIQDFYNPLVAEALKRE) are extracellular. Residues 160-180 (LGASLYLGWAAAALLMLGGGL) form a helical membrane-spanning segment. Residues 181-217 (LCCTCPPSHFERPRGPRLGYSIPSRSGASGLDKRDYV) are Cytoplasmic-facing.

The protein belongs to the claudin family. Interacts with CLDN1, CD81 and OCLN.

It is found in the cell junction. It localises to the tight junction. The protein resides in the cell membrane. Plays a major role in tight junction-specific obliteration of the intercellular space, through calcium-independent cell-adhesion activity. The polypeptide is Claudin-9 (Cldn9) (Mus musculus (Mouse)).